Consider the following 429-residue polypeptide: Enolase (429 aa).

Position 162 (Gln162) interacts with (2R)-2-phosphoglycerate. The active-site Proton donor is Glu204. Asp241, Glu283, and Asp310 together coordinate Mg(2+). Positions 335, 364, 365, and 386 each coordinate (2R)-2-phosphoglycerate. Residue Lys335 is the Proton acceptor of the active site.

It belongs to the enolase family. Mg(2+) is required as a cofactor.

The protein resides in the cytoplasm. It localises to the secreted. It is found in the cell surface. The catalysed reaction is (2R)-2-phosphoglycerate = phosphoenolpyruvate + H2O. Its pathway is carbohydrate degradation; glycolysis; pyruvate from D-glyceraldehyde 3-phosphate: step 4/5. Catalyzes the reversible conversion of 2-phosphoglycerate (2-PG) into phosphoenolpyruvate (PEP). It is essential for the degradation of carbohydrates via glycolysis. The sequence is that of Enolase from Mycolicibacterium gilvum (strain PYR-GCK) (Mycobacterium gilvum (strain PYR-GCK)).